The sequence spans 71 residues: uncharacterized protein (71 aa).

Over residues 1 to 10 the composition is skewed to basic residues; it reads MHRKKRKKEK. The segment at 1–20 is disordered; the sequence is MHRKKRKKEKKRTEKDNTTN. Residues 21–43 traverse the membrane as a helical segment; sequence LPPLFLFPCSLSLPTLLAPVHYI.

It localises to the membrane. This is an uncharacterized protein from Saccharomyces cerevisiae (strain ATCC 204508 / S288c) (Baker's yeast).